The sequence spans 510 residues: Maturase K (510 aa).

The protein belongs to the intron maturase 2 family. MatK subfamily.

Its subcellular location is the plastid. The protein resides in the chloroplast. Usually encoded in the trnK tRNA gene intron. Probably assists in splicing its own and other chloroplast group II introns. The polypeptide is Maturase K (Grahamia bracteata).